Reading from the N-terminus, the 27-residue chain is DELTA-pseudomyrmecitoxin-Pp1a subunit A (27 aa).

In terms of assembly, heterodimer composed of subunit A and subunit B (DELTA-PSDTX-Pp1a); disulfide-linked. Expressed by the venom gland.

The protein resides in the secreted. Its function is as follows. This heterodimer has insecticidal and cytotoxic properties. Induces immediate paralysis when injected into blowflies (Lucilia cuprina), and then death within 24 hours. Also inhibits the growth of Aedes albopictus mosquito C6/36 cells. This chain is DELTA-pseudomyrmecitoxin-Pp1a subunit A, found in Pseudomyrmex penetrator (Ant).